A 362-amino-acid chain; its full sequence is Endopolygalacturonase II (362 aa).

The first 21 residues, 1-21 (MHSFASLLAYGLVAGATFASA), serve as a signal peptide directing secretion. The propeptide occupies 22–27 (SPIEAR). C30 and C45 form a disulfide bridge. The stretch at 156-186 (ANDITFTDVTINNADGDTQGGHNTDAFDVGN) is one PbH1 1 repeat. D201 serves as the catalytic Proton donor. The cysteines at positions 203 and 219 are disulfide-linked. PbH1 repeat units follow at residues 209 to 229 (GENI…SIGS), 238 to 259 (VKNV…RIKT), 267 to 289 (VSEI…VIQQ), and 301 to 322 (TNGV…DSGA). Residue H223 is part of the active site. N240 carries N-linked (GlcNAc...) (high mannose) asparagine glycosylation. Disulfide bonds link C329-C334 and C353-C362.

It belongs to the glycosyl hydrolase 28 family.

It localises to the secreted. The catalysed reaction is (1,4-alpha-D-galacturonosyl)n+m + H2O = (1,4-alpha-D-galacturonosyl)n + (1,4-alpha-D-galacturonosyl)m.. Functionally, involved in maceration and soft-rotting of plant tissue. Hydrolyzes the 1,4-alpha glycosidic bonds of de-esterified pectate in the smooth region of the plant cell wall. The polypeptide is Endopolygalacturonase II (pgaII) (Aspergillus niger (strain ATCC 1015 / CBS 113.46 / FGSC A1144 / LSHB Ac4 / NCTC 3858a / NRRL 328 / USDA 3528.7)).